The following is a 335-amino-acid chain: tRNA N6-adenosine threonylcarbamoyltransferase (335 aa).

Positions 111 and 115 each coordinate Fe cation. Residues Leu134 to Gly138, Asp167, Gly180, and Asn270 each bind substrate. Asp298 contacts Fe cation.

Belongs to the KAE1 / TsaD family. Requires Fe(2+) as cofactor.

Its subcellular location is the cytoplasm. The enzyme catalyses L-threonylcarbamoyladenylate + adenosine(37) in tRNA = N(6)-L-threonylcarbamoyladenosine(37) in tRNA + AMP + H(+). In terms of biological role, required for the formation of a threonylcarbamoyl group on adenosine at position 37 (t(6)A37) in tRNAs that read codons beginning with adenine. Is involved in the transfer of the threonylcarbamoyl moiety of threonylcarbamoyl-AMP (TC-AMP) to the N6 group of A37, together with TsaE and TsaB. TsaD likely plays a direct catalytic role in this reaction. The sequence is that of tRNA N6-adenosine threonylcarbamoyltransferase from Nitrosococcus oceani (strain ATCC 19707 / BCRC 17464 / JCM 30415 / NCIMB 11848 / C-107).